A 396-amino-acid chain; its full sequence is 2-methyl-aconitate isomerase (396 aa).

Residues Ser19 and 66 to 70 contribute to the substrate site; that span reads SSTSK. Cys104 acts as the Proton donor/acceptor in catalysis. Cys104 carries the cysteine sulfinic acid (-SO2H) modification. Residues Asn106, Lys278, Ser309, and His314 each coordinate substrate. Met318 functions as the Proton donor/acceptor in the catalytic mechanism. Gly319 contacts substrate.

It belongs to the PrpF family. Homodimer.

It catalyses the reaction 2-methyl-trans-aconitate = 2-methyl-cis-aconitate. The protein operates within organic acid metabolism; propanoate degradation. In terms of biological role, catalyzes the isomerization of 2-methyl-trans-aconitate to yield 2-methyl-cis-aconitate through a base-catalyzed proton abstraction coupled with a rotation about C2-C3 bond of 2-methyl-aconitate. In Cupriavidus necator (Alcaligenes eutrophus), this protein is 2-methyl-aconitate isomerase.